The chain runs to 204 residues: Lysozyme G (204 aa).

The first 19 residues, 1–19 (MHLMLVLLGLAALLGTSQS), serve as a signal peptide directing secretion. 2 disulfides stabilise this stretch: cysteine 23/cysteine 79 and cysteine 37/cysteine 48. Residues glutamate 92 and aspartate 105 contribute to the active site.

The protein belongs to the glycosyl hydrolase 23 family.

Its subcellular location is the secreted. It catalyses the reaction Hydrolysis of (1-&gt;4)-beta-linkages between N-acetylmuramic acid and N-acetyl-D-glucosamine residues in a peptidoglycan and between N-acetyl-D-glucosamine residues in chitodextrins.. In terms of biological role, has bacteriolytic activity against M.luteus. This chain is Lysozyme G, found in Dromaius novaehollandiae (Emu).